A 211-amino-acid polypeptide reads, in one-letter code: Ribosomal RNA small subunit methyltransferase G (211 aa).

Positions 73, 78, and 141 each coordinate S-adenosyl-L-methionine.

It belongs to the methyltransferase superfamily. RNA methyltransferase RsmG family.

Its subcellular location is the cytoplasm. The catalysed reaction is guanosine(527) in 16S rRNA + S-adenosyl-L-methionine = N(7)-methylguanosine(527) in 16S rRNA + S-adenosyl-L-homocysteine. Specifically methylates the N7 position of guanine in position 527 of 16S rRNA. The protein is Ribosomal RNA small subunit methyltransferase G of Jannaschia sp. (strain CCS1).